A 292-amino-acid chain; its full sequence is Rab effector Noc2 (292 aa).

One can recognise a RabBD domain in the interval 41–158 (QRKSQSLSPA…KRSGAWFYKG (118 aa)). An FYVE-type zinc finger spans residues 89 to 146 (GNGLSQCLLCGEVLGFLGSSSVFCKDCRKKVCTKCGIEASPSQKRPLWLCKICSEQRE). Residues Cys95, Cys98, Cys112, Cys115, Cys120, Cys123, Cys138, and Cys141 each coordinate Zn(2+). Residues 175–292 (PSFRPLPVEP…RTLAGPRGPR (118 aa)) form a disordered region. The segment covering 221-235 (LDDRLRPAGVRDPKG) has biased composition (basic and acidic residues). A Phosphoserine modification is found at Ser248. Over residues 257 to 269 (ASCLSGSQSSLAS) the composition is skewed to low complexity.

As to quaternary structure, recruited to dense-core vesicles through specific interaction with RAB27A in endocrine cells. Interacts with RAB3A, RAB3B, RAB3C and RAB3D. Interacts with ZYX.

It localises to the cytoplasm. The protein resides in the cytoplasmic vesicle. The protein localises to the secretory vesicle membrane. Its function is as follows. Rab GTPase effector involved in the late steps of regulated exocytosis, both in endocrine and exocrine cells. The protein is Rab effector Noc2 (RPH3AL) of Bos taurus (Bovine).